Consider the following 73-residue polypeptide: MLNQVEVLREEYVEGYVVQMWRRNPSNAPVIEVFTEDNLEEGIIPEYVTANDDTFDRIVDAVEFGYLEELELV.

This is Putative gene 60 protein (60) from Bacillus subtilis (Bacteriophage SP01).